A 209-amino-acid polypeptide reads, in one-letter code: Uracil phosphoribosyltransferase (209 aa).

Residues Arg79, Arg104, and 131–139 (DPMLATGGS) each bind 5-phospho-alpha-D-ribose 1-diphosphate. Residues Ile194 and 199–201 (GDA) each bind uracil. 5-phospho-alpha-D-ribose 1-diphosphate is bound at residue Asp200.

Belongs to the UPRTase family. Mg(2+) serves as cofactor.

The catalysed reaction is UMP + diphosphate = 5-phospho-alpha-D-ribose 1-diphosphate + uracil. It functions in the pathway pyrimidine metabolism; UMP biosynthesis via salvage pathway; UMP from uracil: step 1/1. Its activity is regulated as follows. Allosterically activated by GTP. Catalyzes the conversion of uracil and 5-phospho-alpha-D-ribose 1-diphosphate (PRPP) to UMP and diphosphate. This is Uracil phosphoribosyltransferase from Levilactobacillus brevis (strain ATCC 367 / BCRC 12310 / CIP 105137 / JCM 1170 / LMG 11437 / NCIMB 947 / NCTC 947) (Lactobacillus brevis).